The sequence spans 129 residues: Glycine cleavage system H protein (129 aa).

A Lipoyl-binding domain is found at 24–106; the sequence is TYTVGITEHA…YVGGWIFKIK (83 aa). Residue Lys-65 is modified to N6-lipoyllysine.

It belongs to the GcvH family. As to quaternary structure, the glycine cleavage system is composed of four proteins: P, T, L and H. (R)-lipoate serves as cofactor.

The glycine cleavage system catalyzes the degradation of glycine. The H protein shuttles the methylamine group of glycine from the P protein to the T protein. The sequence is that of Glycine cleavage system H protein from Salmonella paratyphi B (strain ATCC BAA-1250 / SPB7).